We begin with the raw amino-acid sequence, 122 residues long: UPF0102 protein XAC0764 (122 aa).

This sequence belongs to the UPF0102 family.

The polypeptide is UPF0102 protein XAC0764 (Xanthomonas axonopodis pv. citri (strain 306)).